We begin with the raw amino-acid sequence, 260 residues long: MKPKISFNNVVMRYGGFLALDRLNLDIADGEFVTVVGPSGCGKSTAMNIAAGLLQPSGGEILVGDKPVTGPGPERGVIFQQYALFPWLTVRQNVEFGLSVAGMSRVKRREISDHYLSLVGLTDFADALPKALSGGMKQRCAIARAYAAAPEILLMDEPFAALDALTRVHMQDQLLDAWSRERRTVMFITHDVDEAVYLANRVIVMAARPGRLDQIIPVDLPYPRTEAIRLSPEFAAIRNRVWHAVYHQQPQTDQQSSHGQ.

An ABC transporter domain is found at 5-228 (ISFNNVVMRY…DLPYPRTEAI (224 aa)). Residue 37–44 (GPSGCGKS) coordinates ATP.

This sequence belongs to the ABC transporter superfamily. In terms of assembly, the complex is composed of two ATP-binding proteins (BruAb2_1123), two transmembrane proteins (BruAb2_1124) and a solute-binding protein (BruAb2_1122).

Its subcellular location is the cell inner membrane. Functionally, probably part of an ABC transporter complex. Probably Responsible for energy coupling to the transport system. The chain is Putative ATP-binding protein BruAb2_1123 from Brucella abortus biovar 1 (strain 9-941).